A 55-amino-acid polypeptide reads, in one-letter code: ATP synthase protein 8 (55 aa).

A helical transmembrane segment spans residues 4–24; sequence LNPNPWFTILIFTWAVFLTIL.

This sequence belongs to the ATPase protein 8 family. As to quaternary structure, F-type ATPases have 2 components, CF(1) - the catalytic core - and CF(0) - the membrane proton channel.

The protein resides in the mitochondrion membrane. Mitochondrial membrane ATP synthase (F(1)F(0) ATP synthase or Complex V) produces ATP from ADP in the presence of a proton gradient across the membrane which is generated by electron transport complexes of the respiratory chain. F-type ATPases consist of two structural domains, F(1) - containing the extramembraneous catalytic core and F(0) - containing the membrane proton channel, linked together by a central stalk and a peripheral stalk. During catalysis, ATP synthesis in the catalytic domain of F(1) is coupled via a rotary mechanism of the central stalk subunits to proton translocation. Part of the complex F(0) domain. Minor subunit located with subunit a in the membrane. This chain is ATP synthase protein 8 (mt-atp8), found in Polypterus ornatipinnis (Ornate bichir).